The primary structure comprises 155 residues: Endoribonuclease YbeY (155 aa).

Residues His120, His124, and His130 each contribute to the Zn(2+) site.

Belongs to the endoribonuclease YbeY family. The cofactor is Zn(2+).

The protein resides in the cytoplasm. Functionally, single strand-specific metallo-endoribonuclease involved in late-stage 70S ribosome quality control and in maturation of the 3' terminus of the 16S rRNA. The polypeptide is Endoribonuclease YbeY (Staphylococcus aureus (strain bovine RF122 / ET3-1)).